A 339-amino-acid chain; its full sequence is MKFVDEAFVRVEAGNGGHGCLSFRREKFIPRGGPDGGDGGDGGSVYFVADKSVNTLVEFRYQRLLRAQNGQPGMGRLRSGKKGEDLIVPVPLGTTVYDKETSELIGDLIEAGDKLCVARGGRHGLGNTHFKSSTNRAPRRTTSGEEGEARELKLELKLLADVGLLGLPNAGKSTFIHAVSKATPKIADYPFTTLYPHLGVVRVEEYRSFVIADIPGLIEGASEGAGLGVQFLKHLERTQLLLHIVDIAPLDGSDPVQSIQAIISELEQFSQNLSQKPRWLVFNKIDLLAPDVAQARCQEIINRLNWKGPVYKISAIKRQGTELLCYDLMSFLETNQRSI.

The Obg domain occupies 1–159 (MKFVDEAFVR…RELKLELKLL (159 aa)). Residues 127 to 147 (NTHFKSSTNRAPRRTTSGEEG) are disordered. Positions 160 to 333 (ADVGLLGLPN…LCYDLMSFLE (174 aa)) constitute an OBG-type G domain. GTP is bound by residues 166–173 (GLPNAGKS), 191–195 (FTTLY), 213–216 (DIPG), 283–286 (NKID), and 314–316 (SAI). Mg(2+) contacts are provided by serine 173 and threonine 193.

It belongs to the TRAFAC class OBG-HflX-like GTPase superfamily. OBG GTPase family. In terms of assembly, monomer. The cofactor is Mg(2+).

The protein resides in the cytoplasm. An essential GTPase which binds GTP, GDP and possibly (p)ppGpp with moderate affinity, with high nucleotide exchange rates and a fairly low GTP hydrolysis rate. Plays a role in control of the cell cycle, stress response, ribosome biogenesis and in those bacteria that undergo differentiation, in morphogenesis control. This chain is GTPase Obg, found in Coxiella burnetii (strain CbuK_Q154) (Coxiella burnetii (strain Q154)).